We begin with the raw amino-acid sequence, 86 residues long: Sec-independent protein translocase protein TatA (86 aa).

The chain crosses the membrane as a helical span at residues 1 to 21; the sequence is MGISIWQLLIILAIVLVLFGA.

Belongs to the TatA/E family. The Tat system comprises two distinct complexes: a TatABC complex, containing multiple copies of TatA, TatB and TatC subunits, and a separate TatA complex, containing only TatA subunits. Substrates initially bind to the TatABC complex, which probably triggers association of the separate TatA complex to form the active translocon.

It localises to the cell inner membrane. Its function is as follows. Part of the twin-arginine translocation (Tat) system that transports large folded proteins containing a characteristic twin-arginine motif in their signal peptide across membranes. TatA could form the protein-conducting channel of the Tat system. This chain is Sec-independent protein translocase protein TatA, found in Hydrogenovibrio crunogenus (strain DSM 25203 / XCL-2) (Thiomicrospira crunogena).